Consider the following 405-residue polypeptide: Putative phosphate permease PYRAB14010 (405 aa).

A run of 11 helical transmembrane segments spans residues 3–23 (MDPW…AIGA), 44–64 (AVLI…KTVT), 82–102 (VLVY…VIAT), 114–134 (IIGG…VNWG), 138–158 (SVVL…FFIF), 181–201 (VWIG…VLHG), 207–227 (GVLK…SMIL), 264–284 (VANA…GMAG), 287–307 (VPVP…GVAT), 329–349 (FTID…GMPI), and 384–404 (FVTV…LWIV).

It belongs to the inorganic phosphate transporter (PiT) (TC 2.A.20) family.

Its subcellular location is the cell membrane. Potential transporter for phosphate. The chain is Putative phosphate permease PYRAB14010 from Pyrococcus abyssi (strain GE5 / Orsay).